We begin with the raw amino-acid sequence, 358 residues long: Putative ZDHHC-type palmitoyltransferase 4 (358 aa).

4 helical membrane passes run 28-48 (FVGF…TIIF), 57-77 (LFFI…TYGI), 171-191 (YFFL…AHSL), and 210-230 (LLVI…GSFG). In terms of domain architecture, DHHC spans 127–177 (SYCKKCSKAKPPRCHHCSVCDKCVLKMDHHCPWIGGCVGFYNYRYFFLFLS). N-linked (GlcNAc...) asparagine glycosylation is found at Asn255 and Asn296. The disordered stretch occupies residues 302-358 (NNKNNENNENNENNEIDNHNNNNNNNNNNNNNEKEDNINENDNLISYDTDEYNRHKK). A compositionally biased stretch (low complexity) spans 305-332 (NNENNENNENNEIDNHNNNNNNNNNNNN).

The protein belongs to the DHHC palmitoyltransferase family.

It is found in the membrane. The enzyme catalyses L-cysteinyl-[protein] + hexadecanoyl-CoA = S-hexadecanoyl-L-cysteinyl-[protein] + CoA. The protein is Putative ZDHHC-type palmitoyltransferase 4 of Dictyostelium discoideum (Social amoeba).